The primary structure comprises 493 residues: Matrilin-1 (493 aa).

The first 23 residues, 1–23 (MDGIFCALPLSLLLLLQSCGVWG), serve as a signal peptide directing secretion. In terms of domain architecture, VWFA 1 spans 24-220 (APPQPRGTLC…THKFQEAFCV (197 aa)). A glycan (N-linked (GlcNAc...) asparagine) is linked at N74. In terms of domain architecture, EGF-like spans 221 to 261 (VSDLCATGDHDCEQICISTPGSYKCACKEGFTLNNDGKTCS). 3 disulfides stabilise this stretch: C225-C236, C232-C245, and C247-C260. The VWFA 2 domain maps to 262-450 (ACSGGSGSAL…GKKLQMKICV (189 aa)). A coiled-coil region spans residues 462–492 (KFQTKVEELINTLQQKLEAVAKRIEALENKI).

In terms of assembly, homotrimer. In terms of tissue distribution, expressed in xyphoid cartilage and chondrocytes (at protein level).

It localises to the secreted. Its subcellular location is the extracellular space. The protein resides in the extracellular matrix. A major component of the extracellular matrix of non-articular cartilage. Binds to type 2 collagens and forms long concatenated protein networks as part of the extracellular matrix. Required for the network-like organization and bundling of collagen fibrils surrounding chondrocytes in the zones of maturation and hypertrophy. Required for mechanotransduction and adaption to mechanical loading in cartilage chondrocytes, resulting in an increase in expression of the extracellular matrix components ACAN and COL2A1. Acts as a moderator of angiogenesis in response to injury. This chain is Matrilin-1, found in Gallus gallus (Chicken).